The primary structure comprises 353 residues: D-alanine--D-alanine ligase (353 aa).

Residues 141–349 form the ATP-grasp domain; that stretch reads KAAFAAAGLP…LEELVSQLVI (209 aa). 176–231 serves as a coordination point for ATP; sequence EAKLKYPCFVKPANLGSSVGISKAQNRNELLIGLDKAASLDRRIVVEQGVSARELE. Mg(2+) contacts are provided by Asp302, Glu316, and Asn318.

This sequence belongs to the D-alanine--D-alanine ligase family. Requires Mg(2+) as cofactor. The cofactor is Mn(2+).

The protein localises to the cytoplasm. It carries out the reaction 2 D-alanine + ATP = D-alanyl-D-alanine + ADP + phosphate + H(+). It participates in cell wall biogenesis; peptidoglycan biosynthesis. Its function is as follows. Cell wall formation. In Prochlorococcus marinus (strain MIT 9313), this protein is D-alanine--D-alanine ligase.